Reading from the N-terminus, the 309-residue chain is Protein FdhE (309 aa).

The protein belongs to the FdhE family.

Its subcellular location is the cytoplasm. Its function is as follows. Necessary for formate dehydrogenase activity. The sequence is that of Protein FdhE from Salmonella typhimurium (strain LT2 / SGSC1412 / ATCC 700720).